The chain runs to 252 residues: 3-deoxy-manno-octulosonate cytidylyltransferase (252 aa).

It belongs to the KdsB family.

Its subcellular location is the cytoplasm. The catalysed reaction is 3-deoxy-alpha-D-manno-oct-2-ulosonate + CTP = CMP-3-deoxy-beta-D-manno-octulosonate + diphosphate. It participates in nucleotide-sugar biosynthesis; CMP-3-deoxy-D-manno-octulosonate biosynthesis; CMP-3-deoxy-D-manno-octulosonate from 3-deoxy-D-manno-octulosonate and CTP: step 1/1. It functions in the pathway bacterial outer membrane biogenesis; lipopolysaccharide biosynthesis. Its function is as follows. Activates KDO (a required 8-carbon sugar) for incorporation into bacterial lipopolysaccharide in Gram-negative bacteria. This Vibrio cholerae serotype O1 (strain ATCC 39315 / El Tor Inaba N16961) protein is 3-deoxy-manno-octulosonate cytidylyltransferase.